Reading from the N-terminus, the 42-residue chain is MQYVKTYLSTAPVLAAIWFAILAGLLIEINRFFPDALILPYV.

The helical transmembrane segment at 7 to 27 (YLSTAPVLAAIWFAILAGLLI) threads the bilayer.

The protein belongs to the PsaJ family.

The protein resides in the plastid. It is found in the chloroplast thylakoid membrane. In terms of biological role, may help in the organization of the PsaE and PsaF subunits. This is Photosystem I reaction center subunit IX from Zygnema circumcarinatum (Green alga).